Consider the following 273-residue polypeptide: Shikimate dehydrogenase (NADP(+)) (273 aa).

Residues 14–16 and Thr61 contribute to the shikimate site; that span reads SKS. Lys65 (proton acceptor) is an active-site residue. Residues Asn86 and Asp102 each coordinate shikimate. Residues 126-130, 150-155, and Met213 each bind NADP(+); these read GAGGA and NRTVAK. Tyr215 contributes to the shikimate binding site. Gly237 lines the NADP(+) pocket.

It belongs to the shikimate dehydrogenase family. In terms of assembly, homodimer.

The enzyme catalyses shikimate + NADP(+) = 3-dehydroshikimate + NADPH + H(+). It participates in metabolic intermediate biosynthesis; chorismate biosynthesis; chorismate from D-erythrose 4-phosphate and phosphoenolpyruvate: step 4/7. Functionally, involved in the biosynthesis of the chorismate, which leads to the biosynthesis of aromatic amino acids. Catalyzes the reversible NADPH linked reduction of 3-dehydroshikimate (DHSA) to yield shikimate (SA). This Tolumonas auensis (strain DSM 9187 / NBRC 110442 / TA 4) protein is Shikimate dehydrogenase (NADP(+)).